A 336-amino-acid polypeptide reads, in one-letter code: MGSGEEPSQMRRALVDSLAGAISGGISRTVTSPLDVIKIRFQVQLEPTTSWGILRRDIYGPSKYTGLLQATKDILREEGLPGFWRGNVPALLMYMPYTAIQFTVLHKLKTFASGSSKTEDHLHLSPYLSYVSGALAGCAATIGSYPFDLLRTILASQGEPKIYPNMRSAFVDIIKTRGVQGLYSGLSPTLVEIIPYAGLQFGSYDTFKRSMMTWNRYKYSHLNFGSEDDSVSSFQLFLCGFAAGTFSKAACHPLDVVKKRFQIEGLKRHPRYGARIESSTYKGMYHALKEIVAKEGFGGLYKGLFPSLVKSAPAGAVTFVAYEYISDWIGSKAGVE.

Helical transmembrane passes span 11–27 (RRAL…GGIS), 88–105 (VPAL…FTVL), 127–150 (YLSY…FDLL), 182–199 (LYSG…YAGL), 230–246 (SVSS…AGTF), and 303–322 (GLFP…FVAY). Solcar repeat units follow at residues 11–111 (RRAL…LKTF), 124–210 (LSPY…FKRS), and 231–328 (VSSF…ISDW).

It belongs to the mitochondrial carrier (TC 2.A.29) family. Ubiquitous.

The protein localises to the mitochondrion inner membrane. In terms of biological role, mitochondrial transporter that mediates uptake of thiamine diphosphate (ThDP) into mitochondria. This chain is Mitochondrial thiamine diphosphate carrier 2, found in Zea mays (Maize).